The primary structure comprises 212 residues: Mediator of RNA polymerase II transcription subunit 20 (212 aa).

The protein belongs to the Mediator complex subunit 20 family. As to quaternary structure, component of the Mediator complex, which is composed of MED1, MED4, MED6, MED7, MED8, MED9, MED10, MED11, MED12, MED13, MED13L, MED14, MED15, MED16, MED17, MED18, MED19, MED20, MED21, MED22, MED23, MED24, MED25, MED26, MED27, MED29, MED30, MED31, CCNC, CDK8 and CDC2L6/CDK11. The MED12, MED13, CCNC and CDK8 subunits form a distinct module termed the CDK8 module. Mediator containing the CDK8 module is less active than Mediator lacking this module in supporting transcriptional activation. Individual preparations of the Mediator complex lacking one or more distinct subunits have been variously termed ARC, CRSP, DRIP, PC2, SMCC and TRAP. Interacts with PPARG.

It is found in the nucleus. Functionally, component of the Mediator complex, a coactivator involved in the regulated transcription of nearly all RNA polymerase II-dependent genes. Mediator functions as a bridge to convey information from gene-specific regulatory proteins to the basal RNA polymerase II transcription machinery. Mediator is recruited to promoters by direct interactions with regulatory proteins and serves as a scaffold for the assembly of a functional preinitiation complex with RNA polymerase II and the general transcription factors. The polypeptide is Mediator of RNA polymerase II transcription subunit 20 (Med20) (Mus musculus (Mouse)).